The primary structure comprises 190 residues: MFEKLKKSLIEAPVVKKGDYDYFVHPITDGVPLVVPEILEEVADGVSKFGNMNVDKIVCVEAMGIHIATALSLKTGIPFVVVRKRSYGLEGEVAVHQMTGYSEGELYINGLNSGDRIILVDDVVSTGGTMIAVLKALKAIKVDIVDVMAVIEKGKGKCIVEDATGVTVRSLVKLNVVNGKVVIKGSIDES.

This sequence belongs to the purine/pyrimidine phosphoribosyltransferase family. Archaeal HPRT subfamily. Homodimer.

It localises to the cytoplasm. It catalyses the reaction IMP + diphosphate = hypoxanthine + 5-phospho-alpha-D-ribose 1-diphosphate. The catalysed reaction is GMP + diphosphate = guanine + 5-phospho-alpha-D-ribose 1-diphosphate. Its pathway is purine metabolism; IMP biosynthesis via salvage pathway; IMP from hypoxanthine: step 1/1. Its function is as follows. Catalyzes a salvage reaction resulting in the formation of IMP that is energically less costly than de novo synthesis. This chain is Hypoxanthine/guanine phosphoribosyltransferase, found in Methanobacterium paludis (strain DSM 25820 / JCM 18151 / SWAN1).